A 386-amino-acid polypeptide reads, in one-letter code: 2-deoxy-scyllo-inosose synthase (386 aa).

NAD(+) contacts are provided by residues aspartate 42, glutamate 73 to lysine 76, glycine 105 to asparagine 109, threonine 129 to threonine 130, serine 140 to lysine 142, and lysine 151 to asparagine 152. Lysine 142 is a catalytic residue. Position 184 (glutamate 184) interacts with Co(2+). The active site involves glutamate 244. Co(2+) contacts are provided by histidine 247 and histidine 263.

This sequence belongs to the sugar phosphate cyclases superfamily. DOI synthase family. Requires NAD(+) as cofactor. Co(2+) serves as cofactor.

It carries out the reaction D-glucose 6-phosphate = 2-deoxy-L-scyllo-inosose + phosphate. It functions in the pathway metabolic intermediate biosynthesis; 2-deoxystreptamine biosynthesis; 2-deoxystreptamine from D-glucose 6-phosphate: step 1/4. It participates in antibiotic biosynthesis; paromomycin biosynthesis. In terms of biological role, catalyzes the intramolecular carbocycle formation from D-glucose-6-phosphate to 2-deoxy-scyllo-inosose (DOI). The protein is 2-deoxy-scyllo-inosose synthase (parC) of Streptomyces paromomycinus (Streptomyces rimosus subsp. paromomycinus).